A 264-amino-acid polypeptide reads, in one-letter code: Hydroxyethylthiazole kinase (264 aa).

Residue Met-47 participates in substrate binding. ATP contacts are provided by Arg-123 and Ser-169. Gly-196 serves as a coordination point for substrate.

This sequence belongs to the Thz kinase family. Mg(2+) serves as cofactor.

The enzyme catalyses 5-(2-hydroxyethyl)-4-methylthiazole + ATP = 4-methyl-5-(2-phosphooxyethyl)-thiazole + ADP + H(+). It participates in cofactor biosynthesis; thiamine diphosphate biosynthesis; 4-methyl-5-(2-phosphoethyl)-thiazole from 5-(2-hydroxyethyl)-4-methylthiazole: step 1/1. In terms of biological role, catalyzes the phosphorylation of the hydroxyl group of 4-methyl-5-beta-hydroxyethylthiazole (THZ). In Brachyspira hyodysenteriae (strain ATCC 49526 / WA1), this protein is Hydroxyethylthiazole kinase.